Here is a 70-residue protein sequence, read N- to C-terminus: Small, acid-soluble spore protein 1 (70 aa).

The protein belongs to the alpha/beta-type SASP family.

In terms of biological role, SASP are bound to spore DNA. They are double-stranded DNA-binding proteins that cause DNA to change to an a-like conformation. They protect the DNA backbone from chemical and enzymatic cleavage and are thus involved in dormant spore's high resistance to UV light. This Geobacillus stearothermophilus (Bacillus stearothermophilus) protein is Small, acid-soluble spore protein 1 (sasP-1).